We begin with the raw amino-acid sequence, 931 residues long: Bifunctional uridylyltransferase/uridylyl-removing enzyme (931 aa).

A uridylyltransferase region spans residues Met-1–Pro-383. Positions Glu-384–Thr-739 are uridylyl-removing. Positions Val-499–Leu-622 constitute an HD domain. ACT domains lie at Glu-740–Arg-822 and Val-851–Gly-931.

It belongs to the GlnD family. Requires Mg(2+) as cofactor.

It catalyses the reaction [protein-PII]-L-tyrosine + UTP = [protein-PII]-uridylyl-L-tyrosine + diphosphate. The enzyme catalyses [protein-PII]-uridylyl-L-tyrosine + H2O = [protein-PII]-L-tyrosine + UMP + H(+). Its activity is regulated as follows. Uridylyltransferase (UTase) activity is inhibited by glutamine, while glutamine activates uridylyl-removing (UR) activity. Its function is as follows. Modifies, by uridylylation and deuridylylation, the PII regulatory proteins (GlnB and homologs), in response to the nitrogen status of the cell that GlnD senses through the glutamine level. Under low glutamine levels, catalyzes the conversion of the PII proteins and UTP to PII-UMP and PPi, while under higher glutamine levels, GlnD hydrolyzes PII-UMP to PII and UMP (deuridylylation). Thus, controls uridylylation state and activity of the PII proteins, and plays an important role in the regulation of nitrogen assimilation and metabolism. The polypeptide is Bifunctional uridylyltransferase/uridylyl-removing enzyme (Nitrobacter hamburgensis (strain DSM 10229 / NCIMB 13809 / X14)).